The primary structure comprises 154 residues: Myoglobin (154 aa).

Positions 2–148 (GLSDGEWQSV…FRNDIAAKYK (147 aa)) constitute a Globin domain. Serine 4 bears the Phosphoserine mark. Histidine 65 is a binding site for nitrite. Histidine 65 is an O2 binding site. Threonine 68 carries the phosphothreonine modification. Histidine 94 provides a ligand contact to heme b.

The protein belongs to the globin family. In terms of assembly, monomeric.

It is found in the cytoplasm. It localises to the sarcoplasm. The enzyme catalyses Fe(III)-heme b-[protein] + nitric oxide + H2O = Fe(II)-heme b-[protein] + nitrite + 2 H(+). It catalyses the reaction H2O2 + AH2 = A + 2 H2O. Monomeric heme protein which primary function is to store oxygen and facilitate its diffusion within muscle tissues. Reversibly binds oxygen through a pentacoordinated heme iron and enables its timely and efficient release as needed during periods of heightened demand. Depending on the oxidative conditions of tissues and cells, and in addition to its ability to bind oxygen, it also has a nitrite reductase activity whereby it regulates the production of bioactive nitric oxide. Under stress conditions, like hypoxia and anoxia, it also protects cells against reactive oxygen species thanks to its pseudoperoxidase activity. This Nycticebus coucang (Slow loris) protein is Myoglobin (MB).